The primary structure comprises 351 residues: Probable protein phosphatase 2C 41 (351 aa).

The region spanning 62–348 (FTSICSNRGE…DDISVLCLFF (287 aa)) is the PPM-type phosphatase domain. Positions 98, 99, 293, and 339 each coordinate Mn(2+).

This sequence belongs to the PP2C family. Mg(2+) serves as cofactor. The cofactor is Mn(2+).

The enzyme catalyses O-phospho-L-seryl-[protein] + H2O = L-seryl-[protein] + phosphate. The catalysed reaction is O-phospho-L-threonyl-[protein] + H2O = L-threonyl-[protein] + phosphate. The protein is Probable protein phosphatase 2C 41 of Arabidopsis thaliana (Mouse-ear cress).